The following is a 252-amino-acid chain: Type III pantothenate kinase (252 aa).

Residue 6 to 13 participates in ATP binding; it reads DMGNTRLK. Substrate is bound by residues tyrosine 93 and 100–103; that span reads GVDR. Aspartate 102 (proton acceptor) is an active-site residue. Threonine 126 lines the ATP pocket. A substrate-binding site is contributed by threonine 179.

The protein belongs to the type III pantothenate kinase family. As to quaternary structure, homodimer. It depends on NH4(+) as a cofactor. K(+) is required as a cofactor.

The protein resides in the cytoplasm. The catalysed reaction is (R)-pantothenate + ATP = (R)-4'-phosphopantothenate + ADP + H(+). The protein operates within cofactor biosynthesis; coenzyme A biosynthesis; CoA from (R)-pantothenate: step 1/5. In terms of biological role, catalyzes the phosphorylation of pantothenate (Pan), the first step in CoA biosynthesis. The protein is Type III pantothenate kinase of Cellvibrio japonicus (strain Ueda107) (Pseudomonas fluorescens subsp. cellulosa).